The chain runs to 244 residues: Methylthioribulose-1-phosphate dehydratase (244 aa).

Residue Cys-89 participates in substrate binding. Zn(2+)-binding residues include His-107 and His-109. Glu-130 acts as the Proton donor/acceptor in catalysis. His-192 provides a ligand contact to Zn(2+).

This sequence belongs to the aldolase class II family. MtnB subfamily. The cofactor is Zn(2+).

The protein resides in the cytoplasm. The enzyme catalyses 5-(methylsulfanyl)-D-ribulose 1-phosphate = 5-methylsulfanyl-2,3-dioxopentyl phosphate + H2O. Its pathway is amino-acid biosynthesis; L-methionine biosynthesis via salvage pathway; L-methionine from S-methyl-5-thio-alpha-D-ribose 1-phosphate: step 2/6. Functionally, catalyzes the dehydration of methylthioribulose-1-phosphate (MTRu-1-P) into 2,3-diketo-5-methylthiopentyl-1-phosphate (DK-MTP-1-P). In Saccharomyces cerevisiae (strain YJM789) (Baker's yeast), this protein is Methylthioribulose-1-phosphate dehydratase.